A 288-amino-acid chain; its full sequence is Pyridoxal kinase PdxY (288 aa).

Substrate-binding positions include serine 10 and 45 to 46; that span reads TQ. Positions 112, 143, 148, and 181 each coordinate ATP. Aspartate 222 is a substrate binding site.

The protein belongs to the pyridoxine kinase family. PdxY subfamily. In terms of assembly, homodimer. Requires Mg(2+) as cofactor.

The catalysed reaction is pyridoxal + ATP = pyridoxal 5'-phosphate + ADP + H(+). It functions in the pathway cofactor metabolism; pyridoxal 5'-phosphate salvage; pyridoxal 5'-phosphate from pyridoxal: step 1/1. Functionally, pyridoxal kinase involved in the salvage pathway of pyridoxal 5'-phosphate (PLP). Catalyzes the phosphorylation of pyridoxal to PLP. The protein is Pyridoxal kinase PdxY of Paraburkholderia xenovorans (strain LB400).